The following is a 1243-amino-acid chain: Inositol hexakisphosphate and diphosphoinositol-pentakisphosphate kinase 2 (1243 aa).

The residue at position 38 (serine 38) is a Phosphoserine. Residue 53–54 (KK) coordinates substrate. Residues arginine 134, lysine 187, histidine 194, and arginine 213 each contribute to the ATP site. 213–214 (RK) is a substrate binding site. Position 223 is a phosphoserine (serine 223). ATP is bound by residues 237–240 (EEFM) and 246–248 (DVK). Substrate-binding residues include lysine 248 and arginine 262. ATP contacts are provided by residues serine 264, aspartate 309, and 321–323 (DVN). Residue 326-329 (SFVK) participates in substrate binding. Residues 371–442 (PTTSGTMMEL…VLDIARQLLM (72 aa)) are polyphosphoinositide-binding domain. 2 disordered regions span residues 898-941 (KGCE…RDEV) and 957-1016 (HIHR…SPVS). Positions 915–941 (ASRENEGRRPFKIDNDDEPHTSKRDEV) are enriched in basic and acidic residues. A compositionally biased stretch (basic residues) spans 958–969 (IHRKSPLPRSRK). 7 positions are modified to phosphoserine: serine 1006, serine 1016, serine 1074, serine 1091, serine 1165, serine 1172, and serine 1180. The segment at 1185 to 1243 (TPAKILPTPPATLKSTKASSKPATSGPSSAVVPNTSSRKKNITSKTETHEHKKNTGKKK) is disordered. The segment covering 1195 to 1209 (ATLKSTKASSKPATS) has biased composition (low complexity). Polar residues predominate over residues 1210-1220 (GPSSAVVPNTS). A phosphoserine mark is found at serine 1220 and serine 1221.

It belongs to the histidine acid phosphatase family. VIP1 subfamily.

The protein localises to the cytoplasm. The protein resides in the cytosol. The enzyme catalyses 1D-myo-inositol hexakisphosphate + ATP = 1-diphospho-1D-myo-inositol 2,3,4,5,6-pentakisphosphate + ADP. The catalysed reaction is 5-diphospho-1D-myo-inositol 1,2,3,4,6-pentakisphosphate + ATP + H(+) = 1,5-bis(diphospho)-1D-myo-inositol 2,3,4,6-tetrakisphosphate + ADP. Bifunctional inositol kinase that acts in concert with the IP6K kinases IP6K1, IP6K2 and IP6K3 to synthesize the diphosphate group-containing inositol pyrophosphates diphosphoinositol pentakisphosphate, PP-InsP5, and bis-diphosphoinositol tetrakisphosphate, (PP)2-InsP4. PP-InsP5 and (PP)2-InsP4, also respectively called InsP7 and InsP8, regulate a variety of cellular processes, including apoptosis, vesicle trafficking, cytoskeletal dynamics, exocytosis, insulin signaling and neutrophil activation. Phosphorylates inositol hexakisphosphate (InsP6) at position 1 to produce PP-InsP5 which is in turn phosphorylated by IP6Ks to produce (PP)2-InsP4. Alternatively, phosphorylates PP-InsP5 at position 1, produced by IP6Ks from InsP6, to produce (PP)2-InsP4. Required for normal hearing. The chain is Inositol hexakisphosphate and diphosphoinositol-pentakisphosphate kinase 2 from Homo sapiens (Human).